Here is a 547-residue protein sequence, read N- to C-terminus: Rho GTPase-activating protein 36 (547 aa).

Residues 1 to 40 (MGGCNPFLKAARTLCPRIMPPLLFLSAFIFLVNVLGGAPG) form the signal peptide. The Rho-GAP domain maps to 226-426 (MSLNPIAKQI…AMIDNWDILF (201 aa)). The disordered stretch occupies residues 493–547 (FDEGSSEEPAVPPGTAHSHDDEEGAGNPPIPEQDRPLLRVPREKQAKTGIGYFFP). A compositionally biased stretch (basic and acidic residues) spans 524–538 (EQDRPLLRVPREKQA).

Functionally, GTPase activator for the Rho-type GTPases by converting them to an inactive GDP-bound state. In Ailuropoda melanoleuca (Giant panda), this protein is Rho GTPase-activating protein 36 (ARHGAP36).